A 414-amino-acid polypeptide reads, in one-letter code: Gamma-glutamyl phosphate reductase (414 aa).

The protein belongs to the gamma-glutamyl phosphate reductase family.

It localises to the cytoplasm. It catalyses the reaction L-glutamate 5-semialdehyde + phosphate + NADP(+) = L-glutamyl 5-phosphate + NADPH + H(+). It participates in amino-acid biosynthesis; L-proline biosynthesis; L-glutamate 5-semialdehyde from L-glutamate: step 2/2. Its function is as follows. Catalyzes the NADPH-dependent reduction of L-glutamate 5-phosphate into L-glutamate 5-semialdehyde and phosphate. The product spontaneously undergoes cyclization to form 1-pyrroline-5-carboxylate. In Geobacillus kaustophilus (strain HTA426), this protein is Gamma-glutamyl phosphate reductase.